A 158-amino-acid polypeptide reads, in one-letter code: Endoribonuclease YbeY (158 aa).

H124, H128, and H134 together coordinate Zn(2+).

The protein belongs to the endoribonuclease YbeY family. The cofactor is Zn(2+).

The protein localises to the cytoplasm. Single strand-specific metallo-endoribonuclease involved in late-stage 70S ribosome quality control and in maturation of the 3' terminus of the 16S rRNA. The chain is Endoribonuclease YbeY from Latilactobacillus sakei subsp. sakei (strain 23K) (Lactobacillus sakei subsp. sakei).